The following is a 150-amino-acid chain: SsrA-binding protein (150 aa).

The protein belongs to the SmpB family.

It is found in the cytoplasm. Its function is as follows. Required for rescue of stalled ribosomes mediated by trans-translation. Binds to transfer-messenger RNA (tmRNA), required for stable association of tmRNA with ribosomes. tmRNA and SmpB together mimic tRNA shape, replacing the anticodon stem-loop with SmpB. tmRNA is encoded by the ssrA gene; the 2 termini fold to resemble tRNA(Ala) and it encodes a 'tag peptide', a short internal open reading frame. During trans-translation Ala-aminoacylated tmRNA acts like a tRNA, entering the A-site of stalled ribosomes, displacing the stalled mRNA. The ribosome then switches to translate the ORF on the tmRNA; the nascent peptide is terminated with the 'tag peptide' encoded by the tmRNA and targeted for degradation. The ribosome is freed to recommence translation, which seems to be the essential function of trans-translation. The sequence is that of SsrA-binding protein from Bacteroides thetaiotaomicron (strain ATCC 29148 / DSM 2079 / JCM 5827 / CCUG 10774 / NCTC 10582 / VPI-5482 / E50).